Here is a 58-residue protein sequence, read N- to C-terminus: MVNLLQIVRDHWVHVLVPMGFVIGCYLDRKSDERLTAFRNKSMLFKRELQPSEEVTWK.

Residues 11–27 (HWVHVLVPMGFVIGCYL) traverse the membrane as a helical segment.

This sequence belongs to the complex I NDUFB1 subunit family. Complex I is composed of 45 different subunits.

It localises to the mitochondrion inner membrane. Functionally, accessory subunit of the mitochondrial membrane respiratory chain NADH dehydrogenase (Complex I) that is believed not to be involved in catalysis. Complex I functions in the transfer of electrons from NADH to the respiratory chain. The immediate electron acceptor for the enzyme is believed to be ubiquinone. The protein is NADH dehydrogenase [ubiquinone] 1 beta subcomplex subunit 1 (NDUFB1) of Homo sapiens (Human).